Reading from the N-terminus, the 132-residue chain is Small ribosomal subunit protein uS11 (132 aa).

The tract at residues 113-132 (VTPIPHDGTRAPGGKRGRRV) is disordered.

It belongs to the universal ribosomal protein uS11 family. As to quaternary structure, part of the 30S ribosomal subunit.

In terms of biological role, located on the platform of the 30S subunit. The chain is Small ribosomal subunit protein uS11 from Methanocella arvoryzae (strain DSM 22066 / NBRC 105507 / MRE50).